The primary structure comprises 199 residues: Probable thymidylate kinase (199 aa).

Residue 9 to 16 participates in ATP binding; that stretch reads GIDGCGKT.

Belongs to the thymidylate kinase family.

The enzyme catalyses dTMP + ATP = dTDP + ADP. The sequence is that of Probable thymidylate kinase from Methanococcus maripaludis (strain C7 / ATCC BAA-1331).